The chain runs to 465 residues: Ras GTPase-activating protein-binding protein 1 (465 aa).

The NTF2 domain occupies 11–133; sequence VGREFVRQYY…FYVHNDIFRY (123 aa). Glycyl lysine isopeptide (Lys-Gly) (interchain with G-Cter in ubiquitin) cross-links involve residues Lys36, Lys50, Lys59, Lys64, Lys76, and Lys123. The tract at residues 142–224 is acidic disordered region; it reads VTEPQEESEE…EAALEEAAPD (83 aa). Residue Thr143 is modified to Phosphothreonine. Positions 144–330 are disordered; it reads EPQEESEEEV…GEPGDVEPRR (187 aa). 2 stretches are compositionally biased toward acidic residues: residues 145–157 and 184–205; these read PQEE…EEPE and EHLE…EPEP. The residue at position 149 (Ser149) is a Phosphoserine. 3 positions are modified to phosphoserine: Ser231, Ser248, and Ser251. Over residues 248-257 the composition is skewed to polar residues; that stretch reads SWASVTSKNL. 2 stretches are compositionally biased toward basic and acidic residues: residues 295–305 and 316–330; these read PQRDQRVREQR and PIRE…EPRR. In terms of domain architecture, RRM spans 338–413; it reads HQLFIGNLPH…VRLNVEEKKT (76 aa). Residues Lys351 and Lys355 each participate in a glycyl lysine isopeptide (Lys-Gly) (interchain with G-Cter in ubiquitin) cross-link. Position 371 is a phosphoserine (Ser371). A Glycyl lysine isopeptide (Lys-Gly) (interchain with G-Cter in ubiquitin) cross-link involves residue Lys374. Lys374 bears the N6-acetyllysine; alternate mark. Lys374 participates in a covalent cross-link: Glycyl lysine isopeptide (Lys-Gly) (interchain with G-Cter in SUMO2); alternate. Residue Lys391 forms a Glycyl lysine isopeptide (Lys-Gly) (interchain with G-Cter in ubiquitin); alternate linkage. The segment at 408–464 is RG-rich region; sequence VEEKKTRAAREGDRRDNRLRGPGGPRGGPSGGMRGPPRGGMVQKPGFGVGRGITTPR. Over residues 411 to 426 the composition is skewed to basic and acidic residues; the sequence is KKTRAAREGDRRDNRL. The segment at 411 to 465 is disordered; sequence KKTRAAREGDRRDNRLRGPGGPRGGPSGGMRGPPRGGMVQKPGFGVGRGITTPRQ. Asymmetric dimethylarginine is present on Arg427. A compositionally biased stretch (gly residues) spans 428 to 445; sequence GPGGPRGGPSGGMRGPPR. At Arg433 the chain carries Asymmetric dimethylarginine; alternate. Residues Arg433, Arg445, Arg458, and Arg464 each carry the omega-N-methylarginine; alternate modification. Dimethylated arginine; alternate is present on Arg458.

In terms of assembly, homodimer and oligomer. Component of a TAU mRNP complex, at least composed of IGF2BP1, ELAVL4 and G3BP1. Binds to the SH3 domain of Ras GTPase-activating protein (RASA1) in proliferating cells. No interaction in quiescent cells. Interacts (via NTF2 domain) with USP10; inhibiting stress granule formation by lowering G3BP1 valence. Interacts (via NTF2 domain) with CAPRIN1; promoting stress granule formation by lowering the saturation-concentration of G3BP1. Interacts (via NTF2 domain) with UBAP2L; promoting stress granule formation. Associates (via RG-rich region) with 40S ribosome subunits. Interacts with RPTOR and SPAG5; this complex is increased by oxidative stress. Interacts with ATXN2L. Interacts with STYXL1. Interacts with CGAS (via N-terminus); this interaction promotes the DNA-binding and activation of CGAS. Interacts (via C-terminus) with RIGI. Interacts with PABPC1. Interacts with QKI (isoforms QKI6 and QKI7); directing N(7)-methylguanine-containing mRNAs to stress granules. Mg(2+) serves as cofactor. Post-translationally, phosphorylation of the acidic disordered region regulates stress granule assembly. RASA1-dependent phosphorylation of Ser-149 induces a conformational change that prevents self-association. Dephosphorylation after HRAS activation is required for stress granule assembly. Ser-149 phosphorylation induces partial nuclear localization. Arg-435 is dimethylated, probably to asymmetric dimethylarginine. In terms of processing, ubiquitinated by TRIM21 via 'Lys-63'-linked polyubiquitination in the NTF2 domain in response to heat shock, leading to stress granule disassembly: ubiquitination promotes interaction with the FAF2 adapter, followed by interaction with VCP, which extracts G3BP1 from stress granules, leading to stress granule disassembly. In case of prolonged stress, ubiquitination by TRIM21 leads to autophagy-dependent degradation of G3BP1 via recruitment of ubiquitinated G3BP1 by SQSTM1 and/or CALCOCO2 to autophagosomes. In terms of tissue distribution, ubiquitous.

It localises to the cytoplasm. The protein localises to the cytosol. Its subcellular location is the perikaryon. The protein resides in the stress granule. It is found in the nucleus. The catalysed reaction is ATP + H2O = ADP + phosphate + H(+). Its activity is regulated as follows. Under physiological conditions, G3BP1 adopts a compact state that is stabilized by intramolecular interactions between the RG-rich and the acidic regions that inhibit phase separation. Upon stress, polysomes disassemble and mRNAs are released in an unfolded protein-free state. Binding of unfolded mRNA to G3BP1 outcompetes the intramolecular interactions and RNA-bound G3BP1 adopts an expanded conformation in which the RG-rich region becomes exposed to engage in protein-protein and protein-RNA interactions, allowing physical cross-linking of RNA molecules to form protein-RNA condensates, leading to liquid-liquid phase separation (LLPS). In terms of biological role, protein involved in various processes, such as stress granule formation and innate immunity. Plays an essential role in stress granule formation. Stress granules are membraneless compartments that store mRNAs and proteins, such as stalled translation pre-initiation complexes, in response to stress. Promotes formation of stress granules phase-separated membraneless compartment by undergoing liquid-liquid phase separation (LLPS) upon unfolded RNA-binding: functions as a molecular switch that triggers RNA-dependent LLPS in response to a rise in intracellular free RNA concentrations. Also acts as an ATP- and magnesium-dependent helicase: unwinds DNA/DNA, RNA/DNA, and RNA/RNA substrates with comparable efficiency. Acts unidirectionally by moving in the 5' to 3' direction along the bound single-stranded DNA. Unwinds preferentially partial DNA and RNA duplexes having a 17 bp annealed portion and either a hanging 3' tail or hanging tails at both 5'- and 3'-ends. Plays an essential role in innate immunity by promoting CGAS and RIGI activity. Participates in the DNA-triggered cGAS/STING pathway by promoting the DNA binding and activation of CGAS. Triggers the condensation of cGAS, a process probably linked to the formation of membrane-less organelles. Also enhances RIGI-induced type I interferon production probably by helping RIGI at sensing pathogenic RNA. May also act as a phosphorylation-dependent sequence-specific endoribonuclease in vitro: Cleaves exclusively between cytosine and adenine and cleaves MYC mRNA preferentially at the 3'-UTR. The protein is Ras GTPase-activating protein-binding protein 1 (G3bp1) of Mus musculus (Mouse).